A 268-amino-acid chain; its full sequence is Fc receptor-like protein 6 (268 aa).

The first 16 residues, 1-16 (MLLWMVLLLCESMAEA), serve as a signal peptide directing secretion. Topologically, residues 17–215 (QELFPNPELT…TAWIKSNMLP (199 aa)) are extracellular. The Ig-like C2-type domain maps to 114-194 (PVLTLQHEAT…AKNNISREIS (81 aa)). A disulfide bridge links C135 with C183. N-linked (GlcNAc...) asparagine glycosylation is found at N180 and N188. A helical transmembrane segment spans residues 216–236 (IWLPASLLGGMVIAAVVLMYF). The Cytoplasmic portion of the chain corresponds to 237 to 268 (FKPCKKHARPETPTLKEPDSFLYVSVDNQRYK).

In terms of assembly, interacts with class II MHC.

The protein resides in the cell membrane. Functionally, acts as a MHC class II receptor. When stimulated on its own, does not play a role in cytokine production or the release of cytotoxic granules by NK cells and cytotoxic CD8(+) T cells. Does not act as an Fc receptor. This is Fc receptor-like protein 6 (Fcrl6) from Mus musculus (Mouse).